A 264-amino-acid chain; its full sequence is MTSDPVLSIRAASKTFGSRRALDAVSLDVNRGEMIALIGPSGSGKSTLLRSIDGLQTIDEGEGAITAFGGPVQARGKVSDQVRKARVRIGFIAQQFNLVGRLSLFSNVALGSLGRIPVVQGLLGWWPKETRDATMAALHRVGVSEYAAQRANTLSGGQQQRGAIARALVQKAKIILADEPVASLDPVSARKVMEILRDLNQSDGLTVVVTLHQVDYALRYCDRVVALKAGQKVYDGPASELKREKLIDIYGPEFEDVFWEGAPQ.

Residues Leu-7–Phe-254 enclose the ABC transporter domain. Gly-39–Ser-46 lines the ATP pocket.

This sequence belongs to the ABC transporter superfamily. Phosphonates importer (TC 3.A.1.9.1) family. As to quaternary structure, the complex is composed of two ATP-binding proteins (PhnC), two transmembrane proteins (PhnE) and a solute-binding protein (PhnD).

The protein resides in the cell inner membrane. The catalysed reaction is phosphonate(out) + ATP + H2O = phosphonate(in) + ADP + phosphate + H(+). Its function is as follows. Part of the ABC transporter complex PhnCDE involved in phosphonates import. Responsible for energy coupling to the transport system. This is Phosphonates import ATP-binding protein PhnC from Caulobacter vibrioides (strain ATCC 19089 / CIP 103742 / CB 15) (Caulobacter crescentus).